A 251-amino-acid polypeptide reads, in one-letter code: Prolactin-7C1 (251 aa).

An N-terminal signal peptide occupies residues 1-30 (MLLSLTHPSFLAMLPMLLMSNLLQWEGVTS). N57 carries N-linked (GlcNAc...) asparagine glycosylation. Disulfide bonds link C101–C217 and C234–C242.

Belongs to the somatotropin/prolactin family. As to expression, expressed exclusively in the placenta. Expressed in spongiotrophoblast cells and trophoblast giant cells of the junctional zone and in labyrinthine trophoblast.

Its subcellular location is the secreted. This chain is Prolactin-7C1 (Prl7c1), found in Mus musculus (Mouse).